Consider the following 736-residue polypeptide: NADPH--cytochrome P450 reductase (736 aa).

Residue Met-1 is a topological domain, lumenal. A helical membrane pass occupies residues 2-24; the sequence is AVSSSSDVIVLSVGIILAALYLF. The Cytoplasmic portion of the chain corresponds to 25–736; that stretch reads REQIFSAAKP…RNRLLLDVWS (712 aa). A Flavodoxin-like domain is found at 66 to 216; the sequence is IVIFYGSQTG…DYLEWKDGMW (151 aa). FMN contacts are provided by residues 72-77, 123-126, 165-174, and Asp-200; these read SQTGTA, ATYG, and LGNKTYEHYN. Positions 269-546 constitute an FAD-binding FR-type domain; sequence KNPYPAPIIA…EGPRGAYKQG (278 aa). Arg-289 serves as a coordination point for NADP(+). FAD is bound by residues 456–459, 474–476, Tyr-480, and 495–498; these read RYYS, TVV, and GVGS. NADP(+) is bound by residues Thr-577, 648–649, and 659–663; these read SR and KIYVQ. Trp-735 is a binding site for FAD.

The protein belongs to the NADPH--cytochrome P450 reductase family. It in the N-terminal section; belongs to the flavodoxin family. This sequence in the C-terminal section; belongs to the flavoprotein pyridine nucleotide cytochrome reductase family. Requires FAD as cofactor. The cofactor is FMN.

It localises to the endoplasmic reticulum membrane. Its subcellular location is the mitochondrion outer membrane. The protein resides in the cell membrane. It carries out the reaction 2 oxidized [cytochrome P450] + NADPH = 2 reduced [cytochrome P450] + NADP(+) + H(+). This enzyme is required for electron transfer from NADP to cytochrome P450 in microsomes. It can also provide electron transfer to heme oxygenase and cytochrome B5. Involved in ergosterol biosynthesis. The protein is NADPH--cytochrome P450 reductase (CPR) of Phanerodontia chrysosporium (White-rot fungus).